A 295-amino-acid polypeptide reads, in one-letter code: UDP-3-O-acyl-N-acetylglucosamine deacetylase (295 aa).

Residues H77, H233, and D237 each coordinate Zn(2+). H260 functions as the Proton donor in the catalytic mechanism.

This sequence belongs to the LpxC family. Requires Zn(2+) as cofactor.

The catalysed reaction is a UDP-3-O-[(3R)-3-hydroxyacyl]-N-acetyl-alpha-D-glucosamine + H2O = a UDP-3-O-[(3R)-3-hydroxyacyl]-alpha-D-glucosamine + acetate. The protein operates within glycolipid biosynthesis; lipid IV(A) biosynthesis; lipid IV(A) from (3R)-3-hydroxytetradecanoyl-[acyl-carrier-protein] and UDP-N-acetyl-alpha-D-glucosamine: step 2/6. In terms of biological role, catalyzes the hydrolysis of UDP-3-O-myristoyl-N-acetylglucosamine to form UDP-3-O-myristoylglucosamine and acetate, the committed step in lipid A biosynthesis. The polypeptide is UDP-3-O-acyl-N-acetylglucosamine deacetylase (Solibacter usitatus (strain Ellin6076)).